Reading from the N-terminus, the 45-residue chain is Omega-hexatoxin-Hv2a (45 aa).

3 disulfides stabilise this stretch: C4/C18, C11/C24, and C17/C29.

Belongs to the neurotoxin 15 family. 02 (omega-actx) subfamily. As to expression, expressed by the venom gland.

The protein localises to the secreted. In terms of biological role, potent inhibitor of insect (bee brain), but not mammalian (rat trigeminal neurons), voltage-gated calcium channels (Cav). In vivo, injection into lone star ticks (Amblyomma americanum) induces curling of all eight legs into closed loops, followed by death. This is Omega-hexatoxin-Hv2a from Hadronyche versuta (Blue mountains funnel-web spider).